The following is a 426-amino-acid chain: Glutamate-1-semialdehyde 2,1-aminomutase (426 aa).

Lys265 carries the post-translational modification N6-(pyridoxal phosphate)lysine.

This sequence belongs to the class-III pyridoxal-phosphate-dependent aminotransferase family. HemL subfamily. In terms of assembly, homodimer. Pyridoxal 5'-phosphate serves as cofactor.

The protein localises to the cytoplasm. The catalysed reaction is (S)-4-amino-5-oxopentanoate = 5-aminolevulinate. Its pathway is porphyrin-containing compound metabolism; protoporphyrin-IX biosynthesis; 5-aminolevulinate from L-glutamyl-tRNA(Glu): step 2/2. In Salmonella gallinarum (strain 287/91 / NCTC 13346), this protein is Glutamate-1-semialdehyde 2,1-aminomutase.